The following is a 251-amino-acid chain: Exotoxin type A (251 aa).

An N-terminal signal peptide occupies residues 1 to 30 (MENNKKVLKKMVFFVLVTFLGLTISQEVFA). A disulfide bond links cysteine 117 and cysteine 128.

It belongs to the staphylococcal/streptococcal toxin family.

Its function is as follows. Causative agent of the symptoms associated with scarlet fever, have been associated with streptococcal toxic shock-like disease and may play a role in the early events of rheumatic fever. The protein is Exotoxin type A (speA) of Streptococcus pyogenes serotype M18 (strain MGAS8232).